The sequence spans 185 residues: Probable gluconokinase (185 aa).

Residue 11 to 18 (GVSGSGKS) participates in ATP binding.

It belongs to the gluconokinase GntK/GntV family.

It catalyses the reaction D-gluconate + ATP = 6-phospho-D-gluconate + ADP + H(+). It functions in the pathway carbohydrate acid metabolism; D-gluconate degradation. The chain is Probable gluconokinase (Idnk) from Rattus norvegicus (Rat).